Reading from the N-terminus, the 611-residue chain is MQKKTNKNLRNIAIIAHVDHGKTTLVDKLLQQSGTFKKHEEFSERIMDSNDLEKERGITILAKNTAIQWKKYRINIIDTPGHADFGGEVERILSMVDSVLLVVDALEGPMPQTRFVTQKAFSYGIKPIVVINKIDRKHARPNWVIDQIFDLFVNLNATDEQLDFPTIYTSALLGTSGVSYNHMNPDMIPLYNAIVKYTPPPTVYPNCPFQMQISQLDYDNYLGIIGIGRINKGSVTSNQSISIINNTEVKRTGKIGKILQYLGLNKIEINEAQSGDIIAITGIDKLNISDTICDPQYISALPMLKIDEPTVEMLFSVNKSPFSGTEGKYITSRQIFNRLKKEENYNVALKIKETNDTNTFSVSGRGELHLSILIENMRREGFELEVSRPQVILKTINELIQEPMETVVLDIENKYQGTIMKTIGQRKGTISNITPDQNNERTRLDCIISSRSLIGFRTEFSTLTSGSGLFYSTFSHYQKIESNKIKRHRNGVLIANKTGQAIGFSLFNLQNRGKLFITHGTKVYEGQIVGIHNRVNDLTVNCLSGKKLTNMRASGSDEAITLTTPIKMTLEYAISFINDDELVEITPKSIRLRKRYLKENERKILLRNIKE.

In terms of domain architecture, tr-type G spans 7-202; that stretch reads KNLRNIAIIA…AIVKYTPPPT (196 aa). GTP contacts are provided by residues 19-24 and 132-135; these read DHGKTT and NKID.

It belongs to the TRAFAC class translation factor GTPase superfamily. Classic translation factor GTPase family. BipA subfamily. In terms of assembly, monomer.

The protein resides in the cytoplasm. It carries out the reaction GTP + H2O = GDP + phosphate + H(+). A 50S ribosomal subunit assembly protein with GTPase activity, required for 50S subunit assembly at low temperatures, may also play a role in translation. Binds GTP and analogs. Binds the 70S ribosome between the 30S and 50S subunits, in a similar position as ribosome-bound EF-G; it contacts a number of ribosomal proteins, both rRNAs and the A-site tRNA. This Buchnera aphidicola subsp. Baizongia pistaciae (strain Bp) protein is Large ribosomal subunit assembly factor BipA.